Reading from the N-terminus, the 271-residue chain is Formamidopyrimidine-DNA glycosylase (271 aa).

The active-site Schiff-base intermediate with DNA is Pro2. Residue Glu3 is the Proton donor of the active site. Catalysis depends on Lys58, which acts as the Proton donor; for beta-elimination activity. Residues His91 and Arg109 each coordinate DNA. Residues 236–270 (FVYGREGLACRVCATPVRRVVIGQRSTFFCPRCQR) form an FPG-type zinc finger. Arg260 serves as the catalytic Proton donor; for delta-elimination activity.

This sequence belongs to the FPG family. As to quaternary structure, monomer. Zn(2+) serves as cofactor.

It catalyses the reaction Hydrolysis of DNA containing ring-opened 7-methylguanine residues, releasing 2,6-diamino-4-hydroxy-5-(N-methyl)formamidopyrimidine.. It carries out the reaction 2'-deoxyribonucleotide-(2'-deoxyribose 5'-phosphate)-2'-deoxyribonucleotide-DNA = a 3'-end 2'-deoxyribonucleotide-(2,3-dehydro-2,3-deoxyribose 5'-phosphate)-DNA + a 5'-end 5'-phospho-2'-deoxyribonucleoside-DNA + H(+). Its function is as follows. Involved in base excision repair of DNA damaged by oxidation or by mutagenic agents. Acts as a DNA glycosylase that recognizes and removes damaged bases. Has a preference for oxidized purines, such as 7,8-dihydro-8-oxoguanine (8-oxoG). Has AP (apurinic/apyrimidinic) lyase activity and introduces nicks in the DNA strand. Cleaves the DNA backbone by beta-delta elimination to generate a single-strand break at the site of the removed base with both 3'- and 5'-phosphates. This chain is Formamidopyrimidine-DNA glycosylase, found in Aromatoleum aromaticum (strain DSM 19018 / LMG 30748 / EbN1) (Azoarcus sp. (strain EbN1)).